Reading from the N-terminus, the 462-residue chain is Trigger factor (462 aa).

The 97-residue stretch at 163-259 (TDYVNIDLQR…VNDVKRRDLP (97 aa)) folds into the PPIase FKBP-type domain. Residues 439 to 462 (SREEFEEEMQQQQQQQAQRQRMAP) form a disordered region. The span at 448-462 (QQQQQQQAQRQRMAP) shows a compositional bias: low complexity.

Belongs to the FKBP-type PPIase family. Tig subfamily.

Its subcellular location is the cytoplasm. The enzyme catalyses [protein]-peptidylproline (omega=180) = [protein]-peptidylproline (omega=0). In terms of biological role, involved in protein export. Acts as a chaperone by maintaining the newly synthesized protein in an open conformation. Functions as a peptidyl-prolyl cis-trans isomerase. The protein is Trigger factor of Salinibacter ruber (strain DSM 13855 / M31).